Consider the following 96-residue polypeptide: MSQIKLTPEELRISAQKYTTGSQSITDVLTVLTQEQAVIDENWDGTAFDSFEAQFNELSPKITQFAQLLEDINQQLLKVADVVEQTDSDIASQINK.

The protein belongs to the WXG100 family. sagEsxA-like subfamily. Homodimer.

The polypeptide is ESAT-6-like protein SAG0230 (Streptococcus agalactiae serotype V (strain ATCC BAA-611 / 2603 V/R)).